Reading from the N-terminus, the 308-residue chain is N-acetylneuraminate lyase (308 aa).

Aceneuramate contacts are provided by Thr-50 and Thr-51. The Proton donor role is filled by Tyr-142. Catalysis depends on Lys-172, which acts as the Schiff-base intermediate with substrate. 5 residues coordinate aceneuramate: Ser-174, Gly-198, Asp-200, Glu-201, and Ser-217.

It belongs to the DapA family. NanA subfamily. In terms of assembly, homotetramer.

The protein localises to the cytoplasm. The enzyme catalyses aceneuramate = aldehydo-N-acetyl-D-mannosamine + pyruvate. It functions in the pathway amino-sugar metabolism; N-acetylneuraminate degradation. Catalyzes the cleavage of N-acetylneuraminic acid (sialic acid) to form pyruvate and N-acetylmannosamine via a Schiff base intermediate. It prevents sialic acids from being recycled and returning to the cell surface. Involved in the N-glycolylneuraminic acid (Neu5Gc) degradation pathway. This Gallus gallus (Chicken) protein is N-acetylneuraminate lyase.